The sequence spans 32 residues: Unknown protein from spot 206 of 2D-PAGE of etiolated coleoptile (32 aa).

The protein is Unknown protein from spot 206 of 2D-PAGE of etiolated coleoptile of Zea mays (Maize).